The primary structure comprises 107 residues: Hydrogenase expression/formation protein HoxL (107 aa).

This sequence belongs to the HupF/HypC family.

This Cupriavidus necator (strain ATCC 17699 / DSM 428 / KCTC 22496 / NCIMB 10442 / H16 / Stanier 337) (Ralstonia eutropha) protein is Hydrogenase expression/formation protein HoxL (hoxL).